The primary structure comprises 195 residues: Shikimate kinase (195 aa).

Glycine 21 to serine 26 contacts ATP. Threonine 25 provides a ligand contact to Mg(2+). Aspartate 43, arginine 67, and glycine 89 together coordinate substrate. A disordered region spans residues arginine 128–arginine 148. ATP is bound at residue arginine 131. The segment covering proline 132 to glutamate 141 has biased composition (polar residues). Residue arginine 158 coordinates substrate.

Belongs to the shikimate kinase family. Monomer. It depends on Mg(2+) as a cofactor.

It localises to the cytoplasm. The catalysed reaction is shikimate + ATP = 3-phosphoshikimate + ADP + H(+). It participates in metabolic intermediate biosynthesis; chorismate biosynthesis; chorismate from D-erythrose 4-phosphate and phosphoenolpyruvate: step 5/7. Its function is as follows. Catalyzes the specific phosphorylation of the 3-hydroxyl group of shikimic acid using ATP as a cosubstrate. In Syntrophus aciditrophicus (strain SB), this protein is Shikimate kinase.